The sequence spans 212 residues: Thaumatin-like protein 1b (212 aa).

Disulfide bonds link C47-C57, C62-C69, C117-C200, C122-C183, C130-C146, C150-C159, and C160-C170.

This sequence belongs to the thaumatin family.

It is found in the secreted. This is Thaumatin-like protein 1b from Malus domestica (Apple).